The chain runs to 236 residues: MITCLIVDDELFAREELADSLSQEADIEIIGQCSNAIEALQTITKEKPQLVFLDIQMPRISGMELIAMLDPDTLPKIVFVTAFDEFAVKAFDNHAFDYLLKPIDADRLSKTLKRVRKDLTPQAVNLIAPRSLEHLPCYSGSKLKVIPIQDVEYVFSDLSGIHVACTKGKVHTQLTLKVLEEKTPLVHCHRQYLISPKAIAEIELLDTGAEVTTLLGDKVPVSRRYLKSLKQLFGFQ.

One can recognise a Response regulatory domain in the interval 3–116 (TCLIVDDELF…RLSKTLKRVR (114 aa)). The residue at position 54 (Asp-54) is a 4-aspartylphosphate. One can recognise an HTH LytTR-type domain in the interval 135–235 (LPCYSGSKLK…LKSLKQLFGF (101 aa)).

This is an uncharacterized protein from Shewanella oneidensis (strain ATCC 700550 / JCM 31522 / CIP 106686 / LMG 19005 / NCIMB 14063 / MR-1).